Here is a 178-residue protein sequence, read N- to C-terminus: Bifunctional protein PyrR (178 aa).

Positions 99 to 111 match the PRPP-binding motif; the sequence is IILVDDVLFTGRT.

Belongs to the purine/pyrimidine phosphoribosyltransferase family. PyrR subfamily. Homodimer and homohexamer; in equilibrium.

It catalyses the reaction UMP + diphosphate = 5-phospho-alpha-D-ribose 1-diphosphate + uracil. Regulates transcriptional attenuation of the pyrimidine nucleotide (pyr) operon by binding in a uridine-dependent manner to specific sites on pyr mRNA. This disrupts an antiterminator hairpin in the RNA and favors formation of a downstream transcription terminator, leading to a reduced expression of downstream genes. Its function is as follows. Also displays a weak uracil phosphoribosyltransferase activity which is not physiologically significant. This Clostridium novyi (strain NT) protein is Bifunctional protein PyrR.